A 689-amino-acid polypeptide reads, in one-letter code: Methionine--tRNA ligase (689 aa).

The short motif at 15-25 (PYANGPIHLGH) is the 'HIGH' region element. Zn(2+)-binding residues include cysteine 146, cysteine 149, cysteine 159, and cysteine 162. The 'KMSKS' region motif lies at 332-336 (KMSKS). Lysine 335 is an ATP binding site. Residues 588–689 (DFAKIDLRIA…EGAQPGMRVK (102 aa)) enclose the tRNA-binding domain.

This sequence belongs to the class-I aminoacyl-tRNA synthetase family. MetG type 1 subfamily. In terms of assembly, homodimer. Zn(2+) is required as a cofactor.

It is found in the cytoplasm. The enzyme catalyses tRNA(Met) + L-methionine + ATP = L-methionyl-tRNA(Met) + AMP + diphosphate. Its function is as follows. Is required not only for elongation of protein synthesis but also for the initiation of all mRNA translation through initiator tRNA(fMet) aminoacylation. This Shewanella baltica (strain OS223) protein is Methionine--tRNA ligase.